The sequence spans 384 residues: S-adenosylmethionine synthase (384 aa).

His15 lines the ATP pocket. Asp17 is a Mg(2+) binding site. Glu43 is a K(+) binding site. 2 residues coordinate L-methionine: Glu56 and Gln99. Residues 99-109 are flexible loop; sequence QSPDINQGVDR. ATP contacts are provided by residues 164–166, 230–231, Asp239, 245–246, Ala262, and Lys266; these read DAK, RF, and RK. Asp239 provides a ligand contact to L-methionine. L-methionine is bound at residue Lys270.

The protein belongs to the AdoMet synthase family. As to quaternary structure, homotetramer; dimer of dimers. It depends on Mg(2+) as a cofactor. K(+) is required as a cofactor.

The protein resides in the cytoplasm. The catalysed reaction is L-methionine + ATP + H2O = S-adenosyl-L-methionine + phosphate + diphosphate. Its pathway is amino-acid biosynthesis; S-adenosyl-L-methionine biosynthesis; S-adenosyl-L-methionine from L-methionine: step 1/1. Its function is as follows. Catalyzes the formation of S-adenosylmethionine (AdoMet) from methionine and ATP. The overall synthetic reaction is composed of two sequential steps, AdoMet formation and the subsequent tripolyphosphate hydrolysis which occurs prior to release of AdoMet from the enzyme. This is S-adenosylmethionine synthase from Serratia proteamaculans (strain 568).